We begin with the raw amino-acid sequence, 163 residues long: Ribosome maturation factor RimP (163 aa).

It belongs to the RimP family.

It localises to the cytoplasm. Required for maturation of 30S ribosomal subunits. This is Ribosome maturation factor RimP from Polynucleobacter necessarius subsp. necessarius (strain STIR1).